Here is a 934-residue protein sequence, read N- to C-terminus: Bifunctional uridylyltransferase/uridylyl-removing enzyme (934 aa).

Residues methionine 1–serine 379 are uridylyltransferase. A uridylyl-removing region spans residues aspartate 380–threonine 736. The HD domain maps to valine 496–methionine 613. ACT domains follow at residues glutamate 737 to alanine 818 and valine 848 to glutamine 931.

Belongs to the GlnD family. It depends on Mg(2+) as a cofactor.

It catalyses the reaction [protein-PII]-L-tyrosine + UTP = [protein-PII]-uridylyl-L-tyrosine + diphosphate. The catalysed reaction is [protein-PII]-uridylyl-L-tyrosine + H2O = [protein-PII]-L-tyrosine + UMP + H(+). With respect to regulation, uridylyltransferase (UTase) activity is inhibited by glutamine, while glutamine activates uridylyl-removing (UR) activity. Modifies, by uridylylation and deuridylylation, the PII regulatory proteins (GlnB and homologs), in response to the nitrogen status of the cell that GlnD senses through the glutamine level. Under low glutamine levels, catalyzes the conversion of the PII proteins and UTP to PII-UMP and PPi, while under higher glutamine levels, GlnD hydrolyzes PII-UMP to PII and UMP (deuridylylation). Thus, controls uridylylation state and activity of the PII proteins, and plays an important role in the regulation of nitrogen assimilation and metabolism. This chain is Bifunctional uridylyltransferase/uridylyl-removing enzyme, found in Brucella abortus (strain S19).